An 877-amino-acid polypeptide reads, in one-letter code: Neurotrypsin (877 aa).

The signal sequence occupies residues 1 to 20; that stretch reads MTLARFVLALVLGALPEVVS. Asn26 carries an N-linked (GlcNAc...) asparagine glycan. A disordered region spans residues 31–90; that stretch reads HRHRHRHSPPPGLQYPYYLPTQQRPPRTRPPPPLPRFPRPPRALPAQRPHALQAGHTPRP. Low complexity predominate over residues 44-55; that stretch reads QYPYYLPTQQRP. The segment covering 58–73 has biased composition (pro residues); it reads TRPPPPLPRFPRPPRA. One can recognise a Kringle domain in the interval 95–167; it reads CPAGEPWVSV…GKVDWGYCDC (73 aa). Cystine bridges form between Cys95/Cys167, Cys111/Cys151, Cys140/Cys165, Cys197/Cys261, Cys210/Cys271, Cys241/Cys251, Cys307/Cys371, Cys320/Cys381, Cys351/Cys361, Cys414/Cys477, Cys427/Cys487, Cys457/Cys467, Cys527/Cys591, Cys540/Cys601, Cys571/Cys581, Cys621/Cys752, Cys663/Cys679, Cys767/Cys833, Cys796/Cys810, and Cys823/Cys852. 4 consecutive SRCR domains span residues 172-273, 282-383, 389-489, and 502-603; these read VRLR…TCSF, IRLV…SCTP, IRLA…ACYP, and VRLM…ICDY. A zymogen activation region region spans residues 621 to 632; sequence CGLRLLHRRQKR. Residues 633-876 form the Peptidase S1 domain; the sequence is IIGGKNSLRG…FVPWIKSVTK (244 aa). His678 functions as the Charge relay system in the catalytic mechanism. Residue Asn685 is glycosylated (N-linked (GlcNAc...) asparagine). Catalysis depends on Asp728, which acts as the Charge relay system. Catalysis depends on Ser827, which acts as the Charge relay system.

This sequence belongs to the peptidase S1 family.

It localises to the secreted. Functionally, plays a role in neuronal plasticity and the proteolytic action may subserve structural reorganizations associated with learning and memory operations. The chain is Neurotrypsin (PRSS12) from Pongo pygmaeus (Bornean orangutan).